We begin with the raw amino-acid sequence, 510 residues long: NAD(P)H-quinone oxidoreductase subunit 2, chloroplastic (510 aa).

The next 12 helical transmembrane spans lie at 24–44, 59–79, 99–119, 124–144, 149–169, 184–204, 229–249, 295–315, 323–343, 354–374, 395–415, and 418–438; these read LLLF…GLIL, WFYF…FFRW, IFQF…VEYI, MAIT…MFLC, LITI…LSGY, LLMG…LYGL, ISIA…PAPF, WHLL…LIAL, MLAY…IVGD, YMLF…SFGL, ALSS…AGFF, and LYLF…IGLL.

It belongs to the complex I subunit 2 family. As to quaternary structure, NDH is composed of at least 16 different subunits, 5 of which are encoded in the nucleus.

The protein resides in the plastid. The protein localises to the chloroplast thylakoid membrane. It catalyses the reaction a plastoquinone + NADH + (n+1) H(+)(in) = a plastoquinol + NAD(+) + n H(+)(out). The enzyme catalyses a plastoquinone + NADPH + (n+1) H(+)(in) = a plastoquinol + NADP(+) + n H(+)(out). Its function is as follows. NDH shuttles electrons from NAD(P)H:plastoquinone, via FMN and iron-sulfur (Fe-S) centers, to quinones in the photosynthetic chain and possibly in a chloroplast respiratory chain. The immediate electron acceptor for the enzyme in this species is believed to be plastoquinone. Couples the redox reaction to proton translocation, and thus conserves the redox energy in a proton gradient. The protein is NAD(P)H-quinone oxidoreductase subunit 2, chloroplastic of Coelogyne cristata (Orchid).